The sequence spans 253 residues: Testis-expressed protein 47 (253 aa).

The protein is Testis-expressed protein 47 of Rattus norvegicus (Rat).